The chain runs to 631 residues: Vacuolar-sorting receptor 6 (631 aa).

The N-terminal stretch at 1 to 25 (MSLIHKGATLALFLALTMVVNGVFG) is a signal peptide. Over 26-563 (RFIVEKSSVT…CIERSGSRIG (538 aa)) the chain is Lumenal. Residues 57–165 (NYGGYMIGSV…SFANTLKQAL (109 aa)) enclose the PA domain. Asn-294 and Asn-431 each carry an N-linked (GlcNAc...) asparagine glycan. 2 consecutive EGF-like domains span residues 413–463 (ETNE…TSCE) and 494–540 (ETSG…FECK). 5 disulfide bridges follow: Cys-417–Cys-435, Cys-424–Cys-444, Cys-446–Cys-462, Cys-498–Cys-511, and Cys-530–Cys-539. A helical membrane pass occupies residues 564–584 (WFPTFVILAAVASICVGGYVF). The Cytoplasmic portion of the chain corresponds to 585–631 (YKYRLRSYMDSEIMAIMSQYMPLESQNTTDPMTGESQHQQLRLTSAA). The short motif at 604–607 (YMPL) is the Tyrosine-based internalization motif element. The segment at 610 to 631 (QNTTDPMTGESQHQQLRLTSAA) is disordered.

This sequence belongs to the VSR (BP-80) family. As to expression, expressed in seedlings, roots, leaves, flowers and siliques.

Its subcellular location is the membrane. It localises to the golgi apparatus membrane. The protein localises to the cytoplasmic vesicle. The protein resides in the clathrin-coated vesicle membrane. It is found in the prevacuolar compartment membrane. Vacuolar-sorting receptor (VSR) involved in clathrin-coated vesicles sorting from Golgi apparatus to vacuoles. The sequence is that of Vacuolar-sorting receptor 6 (VSR6) from Arabidopsis thaliana (Mouse-ear cress).